Consider the following 589-residue polypeptide: Arginine--tRNA ligase (589 aa).

A 'HIGH' region motif is present at residues 131-141; the sequence is ANPTGPLHVGH.

Belongs to the class-I aminoacyl-tRNA synthetase family. Monomer.

Its subcellular location is the cytoplasm. The enzyme catalyses tRNA(Arg) + L-arginine + ATP = L-arginyl-tRNA(Arg) + AMP + diphosphate. This chain is Arginine--tRNA ligase, found in Legionella pneumophila (strain Paris).